The following is a 99-amino-acid chain: AEVLLGSSDGGLVFEPSTFSVASGEKIVFKNNAGFPHNVVFDEDEIPAGVDASKISMSEEDLLNAPGETYAVTLTEKGTYSFYCAPHQGAGMVGKVTVN.

The Plastocyanin-like domain occupies 1–99; it reads AEVLLGSSDG…AGMVGKVTVN (99 aa). Cu cation-binding residues include His-37, Cys-84, His-87, and Met-92.

Belongs to the plastocyanin family. Cu(2+) serves as cofactor.

The protein resides in the plastid. Its subcellular location is the chloroplast thylakoid membrane. Functionally, participates in electron transfer between P700 and the cytochrome b6-f complex in photosystem I. In Lactuca sativa (Garden lettuce), this protein is Plastocyanin (PETE).